The chain runs to 91 residues: C-C motif chemokine 5 (91 aa).

The signal sequence occupies residues 1-23 (MKVSAAALCVILTTAALCVPASA). Intrachain disulfides connect Cys-33-Cys-57 and Cys-34-Cys-73.

The protein belongs to the intercrine beta (chemokine CC) family.

Its subcellular location is the secreted. Chemoattractant for blood monocytes, memory T-helper cells and eosinophils. Causes the release of histamine from basophils and activates eosinophils. May activate several chemokine receptors including CCR1, CCR3, CCR4 and CCR5. May also be an agonist of the G protein-coupled receptor GPR75. Together with GPR75, may play a role in neuron survival through activation of a downstream signaling pathway involving the PI3, Akt and MAP kinases. By activating GPR75 may also play a role in insulin secretion by islet cells. This Cavia porcellus (Guinea pig) protein is C-C motif chemokine 5 (CCL5).